Here is a 131-residue protein sequence, read N- to C-terminus: Profilin-1 (131 aa).

Belongs to the profilin family. As to quaternary structure, occurs in many kinds of cells as a complex with monomeric actin in a 1:1 ratio.

It is found in the cytoplasm. The protein localises to the cytoskeleton. Binds to actin and affects the structure of the cytoskeleton. At high concentrations, profilin prevents the polymerization of actin, whereas it enhances it at low concentrations. By binding to PIP2, it inhibits the formation of IP3 and DG. The chain is Profilin-1 from Lilium longiflorum (Trumpet lily).